The primary structure comprises 151 residues: uncharacterized protein (151 aa).

This is an uncharacterized protein from Homo sapiens (Human).